Reading from the N-terminus, the 485-residue chain is Adenosylhomocysteinase 2 (485 aa).

Positions 64, 139, and 205 each coordinate substrate. Residue 206 to 208 (TTT) coordinates NAD(+). Substrate contacts are provided by Lys-235 and Asp-239. NAD(+) is bound by residues Asn-240, 269-274 (GYGDVG), Glu-292, Asn-327, 348-350 (IGH), and Asn-397.

The protein belongs to the adenosylhomocysteinase family. NAD(+) serves as cofactor.

It carries out the reaction S-adenosyl-L-homocysteine + H2O = L-homocysteine + adenosine. Its pathway is amino-acid biosynthesis; L-homocysteine biosynthesis; L-homocysteine from S-adenosyl-L-homocysteine: step 1/1. Adenosylhomocysteine is a competitive inhibitor of S-adenosyl-L-methionine-dependent methyl transferase reactions; therefore adenosylhomocysteinase may play a key role in the control of methylations via regulation of the intracellular concentration of adenosylhomocysteine. The polypeptide is Adenosylhomocysteinase 2 (SAHH2) (Arabidopsis thaliana (Mouse-ear cress)).